Reading from the N-terminus, the 60-residue chain is Transcriptional regulator Brz (60 aa).

The C4-type; atypical zinc-finger motif lies at 8-52; sequence CPRCGSDVKMGLPMGATVKSVTAASRQEPTSDTQKVRTVECRNDH.

The protein belongs to the Brz family.

Functionally, activates transcription of bacteriorhodopsin (bop) and phytoene synthase (crtB1). May interact with DNA or RNA via the zinc finger motif. This chain is Transcriptional regulator Brz (brz), found in Halobacterium salinarum (strain ATCC 29341 / DSM 671 / R1).